Here is a 252-residue protein sequence, read N- to C-terminus: Hydroxyacylglutathione hydrolase (252 aa).

Positions 54, 56, 58, 59, 111, 130, and 170 each coordinate Zn(2+).

It belongs to the metallo-beta-lactamase superfamily. Glyoxalase II family. In terms of assembly, monomer. It depends on Zn(2+) as a cofactor.

The enzyme catalyses an S-(2-hydroxyacyl)glutathione + H2O = a 2-hydroxy carboxylate + glutathione + H(+). It functions in the pathway secondary metabolite metabolism; methylglyoxal degradation; (R)-lactate from methylglyoxal: step 2/2. Its function is as follows. Thiolesterase that catalyzes the hydrolysis of S-D-lactoyl-glutathione to form glutathione and D-lactic acid. The polypeptide is Hydroxyacylglutathione hydrolase (Francisella tularensis subsp. tularensis (strain FSC 198)).